The chain runs to 285 residues: Probable enoyl-CoA hydratase echA12 (285 aa).

The protein belongs to the enoyl-CoA hydratase/isomerase family.

The enzyme catalyses a (3S)-3-hydroxyacyl-CoA = a (2E)-enoyl-CoA + H2O. The catalysed reaction is a 4-saturated-(3S)-3-hydroxyacyl-CoA = a (3E)-enoyl-CoA + H2O. Could possibly oxidize fatty acids using specific components. In Mycobacterium tuberculosis (strain CDC 1551 / Oshkosh), this protein is Probable enoyl-CoA hydratase echA12 (echA12).